The sequence spans 660 residues: uncharacterized protein (660 aa).

The tract at residues 220 to 239 (ADARGQAAAPPQAQAPAPPD) is disordered. The span at 222 to 239 (ARGQAAAPPQAQAPAPPD) shows a compositional bias: low complexity.

This is an uncharacterized protein from Callospermophilus lateralis (Golden-mantled ground squirrel).